Consider the following 63-residue polypeptide: Beta-defensin 3 (63 aa).

The N-terminal stretch at 1 to 20 is a signal peptide; it reads MRIHYLLFSFLLVLLSPLSA. Positions 21–22 are excised as a propeptide; the sequence is FS. 3 cysteine pairs are disulfide-bonded: cysteine 31–cysteine 59, cysteine 38–cysteine 52, and cysteine 42–cysteine 60.

This sequence belongs to the beta-defensin family.

The protein localises to the secreted. Functionally, has bactericidal activity. The sequence is that of Beta-defensin 3 (Defb3) from Rattus norvegicus (Rat).